Consider the following 261-residue polypeptide: tRNA pseudouridine synthase A (261 aa).

Catalysis depends on Asp51, which acts as the Nucleophile. Tyr109 serves as a coordination point for substrate.

Belongs to the tRNA pseudouridine synthase TruA family. As to quaternary structure, homodimer.

The enzyme catalyses uridine(38/39/40) in tRNA = pseudouridine(38/39/40) in tRNA. In terms of biological role, formation of pseudouridine at positions 38, 39 and 40 in the anticodon stem and loop of transfer RNAs. The protein is tRNA pseudouridine synthase A of Shewanella halifaxensis (strain HAW-EB4).